The chain runs to 240 residues: UDP-2,3-diacylglucosamine hydrolase (240 aa).

Positions 8, 10, 41, 79, and 114 each coordinate Mn(2+). A substrate-binding site is contributed by 79-80; sequence NR. Substrate-binding residues include aspartate 122, serine 160, asparagine 164, lysine 167, and histidine 195. 2 residues coordinate Mn(2+): histidine 195 and histidine 197.

Belongs to the LpxH family. Mn(2+) is required as a cofactor.

Its subcellular location is the cell inner membrane. The catalysed reaction is UDP-2-N,3-O-bis[(3R)-3-hydroxytetradecanoyl]-alpha-D-glucosamine + H2O = 2-N,3-O-bis[(3R)-3-hydroxytetradecanoyl]-alpha-D-glucosaminyl 1-phosphate + UMP + 2 H(+). It functions in the pathway glycolipid biosynthesis; lipid IV(A) biosynthesis; lipid IV(A) from (3R)-3-hydroxytetradecanoyl-[acyl-carrier-protein] and UDP-N-acetyl-alpha-D-glucosamine: step 4/6. Hydrolyzes the pyrophosphate bond of UDP-2,3-diacylglucosamine to yield 2,3-diacylglucosamine 1-phosphate (lipid X) and UMP by catalyzing the attack of water at the alpha-P atom. Involved in the biosynthesis of lipid A, a phosphorylated glycolipid that anchors the lipopolysaccharide to the outer membrane of the cell. This chain is UDP-2,3-diacylglucosamine hydrolase, found in Escherichia fergusonii (strain ATCC 35469 / DSM 13698 / CCUG 18766 / IAM 14443 / JCM 21226 / LMG 7866 / NBRC 102419 / NCTC 12128 / CDC 0568-73).